Here is a 1584-residue protein sequence, read N- to C-terminus: Pentafunctional AROM polypeptide (1584 aa).

Residues 1–384 (MSQDTDVVSV…YEKHATVVSD (384 aa)) are 3-dehydroquinate synthase. NAD(+) is bound by residues 46–48 (DTN), 83–86 (ETSK), 114–116 (GGV), and aspartate 119. Position 130 (arginine 130) interacts with 7-phospho-2-dehydro-3-deoxy-D-arabino-heptonate. 139–140 (TT) is an NAD(+) binding site. Positions 146 and 152 each coordinate 7-phospho-2-dehydro-3-deoxy-D-arabino-heptonate. Lysine 161 contacts NAD(+). A 7-phospho-2-dehydro-3-deoxy-D-arabino-heptonate-binding site is contributed by asparagine 162. Residues 179–182 (FLET) and asparagine 190 each bind NAD(+). Residue glutamate 194 coordinates Zn(2+). 7-phospho-2-dehydro-3-deoxy-D-arabino-heptonate is bound by residues 194–197 (EVIK) and lysine 250. Glutamate 260 serves as the catalytic Proton acceptor; for 3-dehydroquinate synthase activity. Residues 264–268 (RNLLN) and histidine 271 contribute to the 7-phospho-2-dehydro-3-deoxy-D-arabino-heptonate site. Histidine 271 is a binding site for Zn(2+). Residue histidine 275 is the Proton acceptor; for 3-dehydroquinate synthase activity of the active site. Residues histidine 287 and lysine 356 each contribute to the 7-phospho-2-dehydro-3-deoxy-D-arabino-heptonate site. Histidine 287 contributes to the Zn(2+) binding site. An EPSP synthase region spans residues 397-843 (VSPFDNSVSD…WDVLRNSFKI (447 aa)). Cysteine 825 serves as the catalytic For EPSP synthase activity. Residues 863 to 1058 (RASVILIGMR…IQKPHSFFLS (196 aa)) form a shikimate kinase region. Residue 870–877 (GMRGAGKT) coordinates ATP. A 3-dehydroquinase region spans residues 1059 to 1280 (LTFPNINDAI…AAPGQLSVRQ (222 aa)). Residue histidine 1182 is the Proton acceptor; for 3-dehydroquinate dehydratase activity of the active site. The Schiff-base intermediate with substrate; for 3-dehydroquinate dehydratase activity role is filled by lysine 1211. Residues 1293-1584 (PKKFYLFGTP…YMVLCAKEHN (292 aa)) form a shikimate dehydrogenase region.

It in the N-terminal section; belongs to the sugar phosphate cyclases superfamily. Dehydroquinate synthase family. The protein in the 2nd section; belongs to the EPSP synthase family. In the 3rd section; belongs to the shikimate kinase family. This sequence in the 4th section; belongs to the type-I 3-dehydroquinase family. It in the C-terminal section; belongs to the shikimate dehydrogenase family. Homodimer. The cofactor is Zn(2+).

It localises to the cytoplasm. The enzyme catalyses 7-phospho-2-dehydro-3-deoxy-D-arabino-heptonate = 3-dehydroquinate + phosphate. It carries out the reaction 3-dehydroquinate = 3-dehydroshikimate + H2O. The catalysed reaction is shikimate + NADP(+) = 3-dehydroshikimate + NADPH + H(+). It catalyses the reaction shikimate + ATP = 3-phosphoshikimate + ADP + H(+). The enzyme catalyses 3-phosphoshikimate + phosphoenolpyruvate = 5-O-(1-carboxyvinyl)-3-phosphoshikimate + phosphate. The protein operates within metabolic intermediate biosynthesis; chorismate biosynthesis; chorismate from D-erythrose 4-phosphate and phosphoenolpyruvate: step 2/7. It participates in metabolic intermediate biosynthesis; chorismate biosynthesis; chorismate from D-erythrose 4-phosphate and phosphoenolpyruvate: step 3/7. It functions in the pathway metabolic intermediate biosynthesis; chorismate biosynthesis; chorismate from D-erythrose 4-phosphate and phosphoenolpyruvate: step 4/7. Its pathway is metabolic intermediate biosynthesis; chorismate biosynthesis; chorismate from D-erythrose 4-phosphate and phosphoenolpyruvate: step 5/7. The protein operates within metabolic intermediate biosynthesis; chorismate biosynthesis; chorismate from D-erythrose 4-phosphate and phosphoenolpyruvate: step 6/7. Its function is as follows. The AROM polypeptide catalyzes 5 consecutive enzymatic reactions in prechorismate polyaromatic amino acid biosynthesis. The chain is Pentafunctional AROM polypeptide from Schizosaccharomyces japonicus (strain yFS275 / FY16936) (Fission yeast).